Consider the following 342-residue polypeptide: Peroxisomal membrane protein import receptor PEX19 (342 aa).

Residues 1–18 (MNENEYDNFDDLDDLLDE) are compositionally biased toward acidic residues. Disordered regions lie at residues 1–68 (MNEN…DPEL) and 119–141 (CSSL…GFKN). The span at 41 to 54 (SENKEKNAESKDSD) shows a compositional bias: basic and acidic residues. Position 62 is a phosphoserine (Ser-62). Position 304 is a phosphoserine (Ser-304). Positions 321-342 (IDGNDPNLGNLDKELTDGCKQQ) are disordered. Basic and acidic residues predominate over residues 331-342 (LDKELTDGCKQQ). A Cysteine methyl ester modification is found at Cys-339. Residue Cys-339 is the site of S-farnesyl cysteine attachment. Residues 340 to 342 (KQQ) constitute a propeptide, removed in mature form.

The protein belongs to the peroxin-19 family. In terms of assembly, interacts (farnesylated) with PEX3; farnesylation is required for this interaction. Interacts with PEX2, PEX5, PEX10, PEX11, PEX12, PEX13, PEX14, PEX17, PEX22, PEX25, PEX30 and PEX32; the interaction requires well-defined PEX19-binding sites within the peroxisomal membrane protein targeting signal (mPTS) of the PMPs and is independent on the presence of PEX3. Interacts with VPS1.

It localises to the cytoplasm. The protein resides in the peroxisome membrane. Its subcellular location is the endoplasmic reticulum membrane. In terms of biological role, required for proper post-translational import and stabilization of peroxisomal membrane proteins (PMPs). Acts as a cytosolic import receptor for PMPs and delivers them to the docking factor PEX3 at the peroxisomal membrane for subsequent insertion into the membrane. Acts as a chaperone in stabilizing or maintaining PMPs in the lipid bilayer. Directs PEX17, a peripheral component of the peroxisomal matrix protein translocation machinery, to peroxisomes. Stabilizes VPS1, a protein required for peroxisomal fission, at the peroxisomal membrane. Also acts in conjunction with PEX3 in the formation of peroxisomes from preperoxisomal compartments at the endoplasmic reticulum during de novo peroxisome synthesis, probably via the import of additional PMPs. The chain is Peroxisomal membrane protein import receptor PEX19 (PEX19) from Saccharomyces cerevisiae (strain ATCC 204508 / S288c) (Baker's yeast).